A 632-amino-acid chain; its full sequence is tRNA uridine 5-carboxymethylaminomethyl modification enzyme MnmG (632 aa).

FAD-binding positions include 15 to 20, I127, and S182; that span reads GAGHAG. 276–290 is an NAD(+) binding site; it reads GPRYCPSIEDKIVRF. An FAD-binding site is contributed by Q373.

It belongs to the MnmG family. In terms of assembly, homodimer. Heterotetramer of two MnmE and two MnmG subunits. FAD serves as cofactor.

It is found in the cytoplasm. Its function is as follows. NAD-binding protein involved in the addition of a carboxymethylaminomethyl (cmnm) group at the wobble position (U34) of certain tRNAs, forming tRNA-cmnm(5)s(2)U34. This is tRNA uridine 5-carboxymethylaminomethyl modification enzyme MnmG from Streptococcus pyogenes serotype M12 (strain MGAS2096).